Consider the following 557-residue polypeptide: MPKEKYEPPDPRRMYTIMSSEEAANGKKSHWAELEISGKVRSLSASLWSLTHLTALHLSDNSLSRIPSDIAKLHNLVYLDLSSNKIRSLPAELGNMVSLRELHLNNNLLRVLPFELGKLFQLQTLGLKGNPLTQDILNLYQEPDGTRRLLNYLLDNLSGTAKRITTEQPPPRSWIMLQEPDRTRPTALFSVMCYNVLCDKYATRQLYGYCPSWALNWDYRKKAIIQEILSCNADIVSLQEVETEQYYSFFLVELKERGYNGFFSPKSRARTMSEQERKHVDGCAIFFKTEKFTLVQKHTVEFNQLAMANSEGSEAMLNRVMTKDNIGVAVLLELRKESIEMPSGKPHLGTEKQLILVANAHMHWDPEYSDVKLVQTMMFLSEVKNIIDKASRNLKSSVLGEFGTIPLVLCADLNSLPDSGVVEYLSTGGVETNHKDFKELRYNESLTNFSCHGKNGTTNGRITHGFKLQSAYESGLMPYTNYTFDFKGIIDYIFYSKPQLNTLGILGPLDHHWLVENNISGCPHPLIPSDHFSLFAQLELLLPFLPQVNGIHLPGRR.

LRR repeat units lie at residues 52–73 (HLTA…IAKL), 75–96 (NLVY…LGNM), 98–120 (SLRE…GKLF), and 121–143 (QLQT…YQEP). Residues 153-557 (LLDNLSGTAK…VNGIHLPGRR (405 aa)) are nuclease domain. Position 240 (E240) interacts with Mg(2+). The substrate site is built by E240, E276, H361, and P366. D412 is a binding site for Mg(2+). D412 (proton donor/acceptor) is an active-site residue. Substrate contacts are provided by N414, N481, and F486.

It belongs to the CCR4/nocturin family. As to quaternary structure, component of the CCR4-NOT complex; distinct complexes seem to exist that differ in the participation of probably mutually exclusive catalytic subunits; the complex contains two deadenylase subunits, CNOT6 or CNOT6L, and CNOT7 or CNOT8. Interacts with CNOT7 and CNOT8. Interacts with UNR. Interacts with ZFP36L1 (via N-terminus). Interacts with ZNF335. Requires Mg(2+) as cofactor.

It is found in the cytoplasm. The protein localises to the nucleus. The enzyme catalyses Exonucleolytic cleavage of poly(A) to 5'-AMP.. Poly(A) nuclease with 3'-5' RNase activity. Catalytic component of the CCR4-NOT complex which is one of the major cellular mRNA deadenylases and is linked to various cellular processes including bulk mRNA degradation, miRNA-mediated repression, translational repression during translational initiation and general transcription regulation. Additional complex functions may be a consequence of its influence on mRNA expression. Involved in mRNA decay mediated by the major-protein-coding determinant of instability (mCRD) of the FOS gene in the cytoplasm. In the presence of ZNF335, enhances ligand-dependent transcriptional activity of nuclear hormone receptors, including RARA. The increase of ligand-dependent ESR1-mediated transcription is much smaller, if any. Mediates cell proliferation and cell survival and prevents cellular senescence. The polypeptide is CCR4-NOT transcription complex subunit 6 (CNOT6) (Homo sapiens (Human)).